We begin with the raw amino-acid sequence, 257 residues long: MFDFIGVSRYASKELRKEPIVSTIPFTPKKSDERPDESTLTDRQRKVLDAIKTHLAKQGFAPSFREIGEAAGLKSPSSVKHQLQVLDEKGFIRMNANKGRAIEVVNLNDEEPNGKVAQVIPFPSQDDACGSIMASHDVPLVGRIAAGVPITAEQHVDDVMRLPERLTGTGNLFMLEVHGDSMIDAAICDGDFVVVREQNSAENGDIVAALLDDEATVKTFRKDHGHVWLIPHNPAYSPIDGTHAEIMGKVVTVLRKI.

Residues F64 to Q84 constitute a DNA-binding region (H-T-H motif). Residues S181 and K218 each act as for autocatalytic cleavage activity in the active site.

The protein belongs to the peptidase S24 family. As to quaternary structure, homodimer.

The catalysed reaction is Hydrolysis of Ala-|-Gly bond in repressor LexA.. In terms of biological role, represses a number of genes involved in the response to DNA damage (SOS response), including recA and lexA. In the presence of single-stranded DNA, RecA interacts with LexA causing an autocatalytic cleavage which disrupts the DNA-binding part of LexA, leading to derepression of the SOS regulon and eventually DNA repair. This is LexA repressor from Bifidobacterium adolescentis (strain ATCC 15703 / DSM 20083 / NCTC 11814 / E194a).